The following is a 290-amino-acid chain: PIH1 domain-containing protein 1 (290 aa).

Phosphoserine occurs at positions 12 and 173.

Belongs to the PIH1 family. As to quaternary structure, component of the R2TP complex composed at least of RUVBL1, RUVBL2, RPAP3 and PIHD1. Component of the PAQosome complex which is responsible for the biogenesis of several protein complexes and which consists of R2TP complex members RUVBL1, RUVBL2, RPAP3 and PIH1D1, URI complex members PFDN2, PFDN6, PDRG1, UXT and URI1 as well as ASDURF, POLR2E and DNAAF10/WDR92. Interacts with phosphorylated TELO2 and mediates interaction of TELO2 with the R2TP complex. Interacts with phosphorylated ECD, EFTUD2/SNRP116, RPB1 and UBR5 and with RPB1 in a phosphorylation-independent manner. Interacts with the core C/D box snoRNP particle components NOP58 and FBL and with RUVBL1/TIP49. Interacts with RPAP3 and DNAAF10. Interacts with histone H4 and with SWI/SNF complex member SMARCB1/SNF5. Interacts with the mTORC1 complex member RPTOR. Interacts with MSL1. Expressed at low levels in normal mammary epithelial cells (at protein level). Highest expression in lung, leukocyte and placenta. Expressed at lower levels in brain, prostate, colon, heart, small intestine, liver, ovary, pancreas, skeletal muscle, spleen, testis and thymus.

It is found in the nucleus. Its function is as follows. Involved in the assembly of C/D box small nucleolar ribonucleoprotein (snoRNP) particles. Recruits the SWI/SNF complex to the core promoter of rRNA genes and enhances pre-rRNA transcription. Mediates interaction of TELO2 with the R2TP complex which is necessary for the stability of MTOR and SMG1. Positively regulates the assembly and activity of the mTORC1 complex. The protein is PIH1 domain-containing protein 1 (PIH1D1) of Homo sapiens (Human).